Consider the following 550-residue polypeptide: Hydroxylamine reductase (550 aa).

Residues Cys-3, Cys-6, Cys-18, and Cys-25 each contribute to the [2Fe-2S] cluster site. The hybrid [4Fe-2O-2S] cluster site is built by His-249, Glu-273, Cys-317, Cys-405, Cys-433, Cys-458, Glu-492, and Lys-494. The residue at position 405 (Cys-405) is a Cysteine persulfide.

This sequence belongs to the HCP family. [2Fe-2S] cluster serves as cofactor. Requires hybrid [4Fe-2O-2S] cluster as cofactor.

The protein resides in the cytoplasm. It carries out the reaction A + NH4(+) + H2O = hydroxylamine + AH2 + H(+). In terms of biological role, catalyzes the reduction of hydroxylamine to form NH(3) and H(2)O. The protein is Hydroxylamine reductase of Escherichia coli O17:K52:H18 (strain UMN026 / ExPEC).